Here is a 238-residue protein sequence, read N- to C-terminus: Cysteine-rich venom protein natrin-2 (238 aa).

A signal peptide spans 1-19; that stretch reads MIAFIVLLSLAAVLQQSSG. An SCP domain is found at 38 to 164; sequence VDKHNALRRS…SSKYLYVCQY (127 aa). Intrachain disulfides connect Cys-75-Cys-153, Cys-92-Cys-165, Cys-148-Cys-162, Cys-184-Cys-191, Cys-187-Cys-196, Cys-200-Cys-233, Cys-209-Cys-227, and Cys-218-Cys-231. In terms of domain architecture, ShKT spans 200-233; that stretch reads CKHHNVFSNCQSLAKQNACQTEWMKSKCAASCFC.

In terms of tissue distribution, expressed by the venom gland.

The protein resides in the secreted. Its function is as follows. Inhibits carbachol-induced muscle contraction and weakly blocks muscle contraction evoked by potassium. The polypeptide is Cysteine-rich venom protein natrin-2 (Naja atra (Chinese cobra)).